The chain runs to 472 residues: UDP-glycosyltransferase 708G2 (472 aa).

H23 serves as the catalytic Proton acceptor. H23 serves as a coordination point for an anthocyanidin. D117 serves as the catalytic Charge relay. Residue T140 coordinates UDP-alpha-D-glucose. The UDP stretch occupies residues 283 to 284 (SR). UDP-alpha-D-glucose contacts are provided by V346, Q348, H363, W366, N367, S368, and E371. An anthocyanidin is bound at residue G386. D387 and Q388 together coordinate UDP-alpha-D-glucose.

This sequence belongs to the UDP-glycosyltransferase family. In terms of tissue distribution, expressed at low levels in leaves, flowers and immature leaves.

It carries out the reaction a 3'-hydro-2'-hydroxy-beta-oxodihydrochalcone + UDP-alpha-D-glucose = a 3'-(beta-D-glucopyranosyl)-2'-hydroxy-beta-oxodihydrochalcone + UDP + H(+). Its function is as follows. UDP-glucose-dependent glucosyltransferase catalyzing the C-glucosylation of 2-hydroxyflavanones (2-hydroxylnaringenin and 2-hydroxypinocembrin) and phloretin. No activity with flavanones, flavones or flavonols. Exhibits C-glucosylation activity toward 2-phenyl-2',4',6'-trihydroxyacetophenone. Can use UDP-xylose as sugar donor, but catalytic efficiency is much lower toward UDP-xylose than toward UDP-glucose. The polypeptide is UDP-glycosyltransferase 708G2 (UGT708G2) (Citrus unshiu (Satsuma mandarin)).